Reading from the N-terminus, the 112-residue chain is Small ribosomal subunit protein bS6 (112 aa).

The protein belongs to the bacterial ribosomal protein bS6 family.

Its function is as follows. Binds together with bS18 to 16S ribosomal RNA. This Legionella pneumophila (strain Paris) protein is Small ribosomal subunit protein bS6.